A 381-amino-acid polypeptide reads, in one-letter code: MIDTLRPVPFASEMAICKTVSWLNEQLELGNERLLLMDCRPQELYESSHIESAINVAIPGIMLRRLQKGNLPVRALFTRCEDRDRFTRRCGTDTVVLYDENSSDWNENTGGESVLGLLLKKLKDEGCRAFYLEGGFSKFQAEFALHCETNLDGSCSSSSPPLPVLGLGGLRISSDSSSDIESDLDRDPNSATDSDGSPLSNSQPSFPVEILPFLYLGCAKDSTNLDVLEEFGIKYILNVTPNLPNLFENAGEFKYKQIPISDHWSQNLSQFFPEAISFIDEARGKNCGVLVHCLAGISRSVTVTVAYLMQKLNLSMNDAYDIVKMKKSNISPNFNFMGQLLDFERTLGLSSPCDNRVPTPQLYFTTPSNQNVYQVDSLQST.

The Rhodanese domain occupies 30–148 (GNERLLLMDC…FQAEFALHCE (119 aa)). A disordered region spans residues 176–203 (SSSDIESDLDRDPNSATDSDGSPLSNSQ). The segment covering 189–203 (NSATDSDGSPLSNSQ) has biased composition (polar residues). The Tyrosine-protein phosphatase domain occupies 206-349 (FPVEILPFLY…LLDFERTLGL (144 aa)). The Phosphocysteine intermediate role is filled by Cys293.

It belongs to the protein-tyrosine phosphatase family. Non-receptor class dual specificity subfamily. Interacts with MAPK1/ERK2. Ubiquitinated by the SCF(FBXO31) complex, leading to its proteasomal degradation.

Its subcellular location is the cytoplasm. The enzyme catalyses O-phospho-L-tyrosyl-[protein] + H2O = L-tyrosyl-[protein] + phosphate. The catalysed reaction is O-phospho-L-seryl-[protein] + H2O = L-seryl-[protein] + phosphate. It catalyses the reaction O-phospho-L-threonyl-[protein] + H2O = L-threonyl-[protein] + phosphate. Dual specificity protein phosphatase, which mediates dephosphorylation and inactivation of MAP kinases. Has a specificity for the ERK family. Plays an important role in alleviating acute postoperative pain. Necessary for the normal dephosphorylation of the long-lasting phosphorylated forms of spinal MAPK1/3 and MAP kinase p38 induced by peripheral surgery, which drives the resolution of acute postoperative allodynia. Also important for dephosphorylation of MAPK1/3 in local wound tissue, which further contributes to resolution of acute pain. This chain is Dual specificity protein phosphatase 6 (Dusp6), found in Mus musculus (Mouse).